A 190-amino-acid chain; its full sequence is MRNILAPVLSLVLIAGVASPALAASGPFFSLKNTDFVVTIAFLVFIAVLFYFKVPSMIGGALDKRAEGIQSDLDEARKLREEAQSLLASFERKQKEMQGQADAIVAAAKEEAQRSAEQAKVDLEASIARRLAAAQDQIASAEAAAVKDVRDRAIAIAVAAAGDVIASSMTAAEANKLIDAGIADAGAKLH.

Residues 4–24 (ILAPVLSLVLIAGVASPALAA) traverse the membrane as a helical segment.

The protein belongs to the ATPase B chain family. In terms of assembly, F-type ATPases have 2 components, F(1) - the catalytic core - and F(0) - the membrane proton channel. F(1) has five subunits: alpha(3), beta(3), gamma(1), delta(1), epsilon(1). F(0) has three main subunits: a(1), b(2) and c(10-14). The alpha and beta chains form an alternating ring which encloses part of the gamma chain. F(1) is attached to F(0) by a central stalk formed by the gamma and epsilon chains, while a peripheral stalk is formed by the delta and b chains.

The protein localises to the cell inner membrane. F(1)F(0) ATP synthase produces ATP from ADP in the presence of a proton or sodium gradient. F-type ATPases consist of two structural domains, F(1) containing the extramembraneous catalytic core and F(0) containing the membrane proton channel, linked together by a central stalk and a peripheral stalk. During catalysis, ATP synthesis in the catalytic domain of F(1) is coupled via a rotary mechanism of the central stalk subunits to proton translocation. Its function is as follows. Component of the F(0) channel, it forms part of the peripheral stalk, linking F(1) to F(0). This is ATP synthase subunit b from Ruegeria pomeroyi (strain ATCC 700808 / DSM 15171 / DSS-3) (Silicibacter pomeroyi).